A 181-amino-acid chain; its full sequence is Probable cobalt-precorrin-6B C(15)-methyltransferase (decarboxylating) (181 aa).

Residues threonine 16, 40-44 (GCGSG), aspartate 61, and alanine 89 contribute to the S-adenosyl-L-methionine site.

This sequence belongs to the methyltransferase superfamily. Archaeal-type CbiT family.

It catalyses the reaction Co-precorrin-6B + S-adenosyl-L-methionine = Co-precorrin-7 + S-adenosyl-L-homocysteine + CO2. Its pathway is cofactor biosynthesis; adenosylcobalamin biosynthesis; cob(II)yrinate a,c-diamide from sirohydrochlorin (anaerobic route): step 8/10. Functionally, catalyzes the methylation of C-15 in cobalt-precorrin-6B followed by the decarboxylation of C-12 to form cobalt-precorrin-7. This is Probable cobalt-precorrin-6B C(15)-methyltransferase (decarboxylating) from Methanococcus maripaludis (strain C7 / ATCC BAA-1331).